Consider the following 20-residue polypeptide: AGLDLGAASXFGALAFEGVA.

N-glycosylated and O-glycosylated.

The protein resides in the secreted. Its subcellular location is the extracellular space. Functionally, antifreeze proteins bind to the surface of ice crystals and inhibit the growth of these crystals, this inhibition causes thermal hysteresis. Causes the shape of ice crystals to change from hexagonal to a bipyramidal shape with rugged facets. Inhibits recrystallization of ice crystals. This Antarctomyces psychrotrophicus protein is Antifreeze protein.